Consider the following 93-residue polypeptide: Co-chaperonin GroES (93 aa).

The protein belongs to the GroES chaperonin family. As to quaternary structure, heptamer of 7 subunits arranged in a ring. Interacts with the chaperonin GroEL.

It is found in the cytoplasm. Functionally, together with the chaperonin GroEL, plays an essential role in assisting protein folding. The GroEL-GroES system forms a nano-cage that allows encapsulation of the non-native substrate proteins and provides a physical environment optimized to promote and accelerate protein folding. GroES binds to the apical surface of the GroEL ring, thereby capping the opening of the GroEL channel. In Streptococcus intermedius, this protein is Co-chaperonin GroES.